A 92-amino-acid polypeptide reads, in one-letter code: Small ribosomal subunit protein uS17 (92 aa).

It belongs to the universal ribosomal protein uS17 family. Part of the 30S ribosomal subunit.

In terms of biological role, one of the primary rRNA binding proteins, it binds specifically to the 5'-end of 16S ribosomal RNA. The polypeptide is Small ribosomal subunit protein uS17 (Cupriavidus necator (strain ATCC 17699 / DSM 428 / KCTC 22496 / NCIMB 10442 / H16 / Stanier 337) (Ralstonia eutropha)).